The following is a 309-amino-acid chain: Ribosomal RNA small subunit methyltransferase H (309 aa).

S-adenosyl-L-methionine is bound by residues 33–35 (GGH), Asp53, Phe79, Asp100, and Gln107.

The protein belongs to the methyltransferase superfamily. RsmH family.

Its subcellular location is the cytoplasm. The catalysed reaction is cytidine(1402) in 16S rRNA + S-adenosyl-L-methionine = N(4)-methylcytidine(1402) in 16S rRNA + S-adenosyl-L-homocysteine + H(+). Its function is as follows. Specifically methylates the N4 position of cytidine in position 1402 (C1402) of 16S rRNA. In Clostridium botulinum (strain 657 / Type Ba4), this protein is Ribosomal RNA small subunit methyltransferase H.